The primary structure comprises 37 residues: Large ribosomal subunit protein bL36c (37 aa).

It belongs to the bacterial ribosomal protein bL36 family.

Its subcellular location is the plastid. It localises to the organellar chromatophore. The polypeptide is Large ribosomal subunit protein bL36c (Paulinella chromatophora).